Reading from the N-terminus, the 229-residue chain is Transmembrane protein 217 (229 aa).

The chain crosses the membrane as a helical span at residues 13-33 (MGTVLSGVFTIMAVDMYLIFE). Asparagine 39 carries N-linked (GlcNAc...) asparagine glycosylation. 3 helical membrane passes run 67–87 (IVLF…YSVY), 94–114 (LVIY…IQIL), and 129–149 (WFGL…VINY). Asparagine 156 is a glycosylation site (N-linked (GlcNAc...) asparagine).

It is found in the membrane. In Homo sapiens (Human), this protein is Transmembrane protein 217 (TMEM217).